A 155-amino-acid polypeptide reads, in one-letter code: MTFLFLILVFIIEILQLSVFPPIFGNAYIVPSLAFLLVLFSSYKIKEKALLLAFLSGLFYDAVVNFLGFISLLNVVFTYLYLVLNNILFVKNPKVEVFLIMPLILLLRKLTIFLVVNTKFPLNIGLKDFGVVLLIDLIFLILLYKVFNKYVYEKA.

Transmembrane regions (helical) follow at residues 2–24 (TFLFLILVFIIEILQLSVFPPIF), 62–84 (AVVNFLGFISLLNVVFTYLYLVL), 97–116 (VFLIMPLILLLRKLTIFLVV), and 131–148 (VVLLIDLIFLILLYKVFN).

The protein localises to the cell membrane. This is an uncharacterized protein from Aquifex aeolicus (strain VF5).